Here is a 445-residue protein sequence, read N- to C-terminus: Methylenetetrahydrofolate--tRNA-(uracil-5-)-methyltransferase TrmFO (445 aa).

Residue 10–15 coordinates FAD; the sequence is GGGLSG.

This sequence belongs to the MnmG family. TrmFO subfamily. FAD serves as cofactor.

It localises to the cytoplasm. The catalysed reaction is uridine(54) in tRNA + (6R)-5,10-methylene-5,6,7,8-tetrahydrofolate + NADH + H(+) = 5-methyluridine(54) in tRNA + (6S)-5,6,7,8-tetrahydrofolate + NAD(+). It catalyses the reaction uridine(54) in tRNA + (6R)-5,10-methylene-5,6,7,8-tetrahydrofolate + NADPH + H(+) = 5-methyluridine(54) in tRNA + (6S)-5,6,7,8-tetrahydrofolate + NADP(+). In terms of biological role, catalyzes the folate-dependent formation of 5-methyl-uridine at position 54 (M-5-U54) in all tRNAs. In Lawsonia intracellularis (strain PHE/MN1-00), this protein is Methylenetetrahydrofolate--tRNA-(uracil-5-)-methyltransferase TrmFO.